We begin with the raw amino-acid sequence, 275 residues long: uncharacterized protein (275 aa).

Mg(2+) contacts are provided by E71, D85, I87, and D88. Substrate is bound at residue E71. Substrate is bound at residue 87-90 (IDGT). Helical transmembrane passes span 87–107 (IDGT…IAFV), 112–132 (PVLG…SVDG), and 178–198 (IVCL…RLAG). Residue D208 coordinates Mg(2+). D208 is a binding site for substrate.

It belongs to the inositol monophosphatase superfamily.

The protein resides in the cell membrane. This is an uncharacterized protein from Sinorhizobium fredii (strain NBRC 101917 / NGR234).